The primary structure comprises 290 residues: Ribosome-inactivating protein bryodin I (290 aa).

The first 23 residues, 1–23 (MIKLLVLWLLILTIFLKSPTVEG), serve as a signal peptide directing secretion. Active-site residues include glutamate 183 and glutamate 212. Residues asparagine 214 and asparagine 250 are each glycosylated (N-linked (GlcNAc...) asparagine). Residues 271 to 290 (AIGEDISMTLIGFEHGLYGI) constitute a propeptide, removed in mature form.

Belongs to the ribosome-inactivating protein family. Type 1 RIP subfamily. In terms of processing, appears to undergo proteolytic cleavage in the C-terminal to produce a shorter protein.

It carries out the reaction Endohydrolysis of the N-glycosidic bond at one specific adenosine on the 28S rRNA.. In terms of biological role, ribosome-inactivating protein of type 1, inhibits protein synthesis in animal cells. The polypeptide is Ribosome-inactivating protein bryodin I (Bryonia dioica (Red bryony)).